Reading from the N-terminus, the 37-residue chain is Large ribosomal subunit protein bL36 (37 aa).

This sequence belongs to the bacterial ribosomal protein bL36 family.

This chain is Large ribosomal subunit protein bL36, found in Colwellia psychrerythraea (strain 34H / ATCC BAA-681) (Vibrio psychroerythus).